Reading from the N-terminus, the 211-residue chain is 1-deoxy-D-xylulose 5-phosphate reductoisomerase (211 aa).

D14 provides a ligand contact to Mn(2+). Positions 15, 16, 40, 63, 76, 81, 82, and 85 each coordinate 1-deoxy-D-xylulose 5-phosphate. Residue E16 participates in Mn(2+) binding. E85 serves as a coordination point for Mn(2+).

This sequence belongs to the DXR family. Requires Mn(2+) as cofactor. The cofactor is Mg(2+). As to expression, mostly expressed in flowers and, to a lower extent, in leaves.

Its subcellular location is the plastid. The protein resides in the chloroplast stroma. The catalysed reaction is 2-C-methyl-D-erythritol 4-phosphate + NADP(+) = 1-deoxy-D-xylulose 5-phosphate + NADPH + H(+). It participates in isoprenoid biosynthesis; isopentenyl diphosphate biosynthesis via DXP pathway; isopentenyl diphosphate from 1-deoxy-D-xylulose 5-phosphate: step 1/6. Enzyme of the plastid non-mevalonate pathway for isoprenoid biosynthesis that catalyzes the NADPH-dependent rearrangement and reduction of 1-deoxy-D-xylulose-5-phosphate (DXP) to 2-C-methyl-D-erythritol 4-phosphate (MEP). Required for chloroplast development. In Thymus vulgaris (Thyme), this protein is 1-deoxy-D-xylulose 5-phosphate reductoisomerase.